Consider the following 687-residue polypeptide: MIDQYKHQQLRIGLVSPKQISAWATKILPNREIVGEVTKPYTFHYKTNKPEKDGLFCERIFGPIKSGICACGNYRVIRNEKEDPKFCEQCGVEFVDSRIRRYQMGYIKLACPVTHVWYLKRLPSYIANFLDKPLKELEGLVYCDYPNFSFARPIAKKPTFLRLRGLFEYEIQSWKYSIPLFFTTQGFDAFRNREISTGAGAIREQLADLDLRTIIDYSFAEWKELGEEDPTGNEWEDRKVGRRKDFLVRRMELAKHFIRTNIEPEWMVLCLLPVLPPELRPIIQIDGGKLMSSDINELYRRVIYRNNTLTDLLTTSRSTPGELVMCQEKLVQEAVDTLLDNGIRGQPMRDGHNKVYKSFSDVIEGKEGRFRETLLGKRVDYSGRSVIVVGPSLSLHRCGLPREIAIELFQTFIIRGLIRQHLASNIGVAKSKIREKEPIIWKILQEVMQGHPILLNRAPTLHRLGIQAFQPILVEGRAICLHPLVCKGFNADFDGDQMAVHVPLSLEAQTEARLLMFSHMNLLSPAIGDPISVPTQDMLIGLYILTSGTRRGICANRYNPWNRKNDQNERIDDKNYKYMEEPFFCNSYDAIGAYCQKRINLDSPLWLRWRLDQRIIASREAPVEVHYESLGTYHEIYAHYLIIRNIKKEIIFVYIRTTVGHIYLYREIEEAIQGFSRACSYGKTVLK.

4 residues coordinate Zn(2+): C69, C71, C87, and C90. Positions 492, 494, and 496 each coordinate Mg(2+).

This sequence belongs to the RNA polymerase beta' chain family. RpoC1 subfamily. As to quaternary structure, in plastids the minimal PEP RNA polymerase catalytic core is composed of four subunits: alpha, beta, beta', and beta''. When a (nuclear-encoded) sigma factor is associated with the core the holoenzyme is formed, which can initiate transcription. Mg(2+) serves as cofactor. Requires Zn(2+) as cofactor.

The protein resides in the plastid. Its subcellular location is the chloroplast. It catalyses the reaction RNA(n) + a ribonucleoside 5'-triphosphate = RNA(n+1) + diphosphate. Functionally, DNA-dependent RNA polymerase catalyzes the transcription of DNA into RNA using the four ribonucleoside triphosphates as substrates. The protein is DNA-directed RNA polymerase subunit beta' of Silene latifolia (White campion).